The sequence spans 357 residues: Chorismate synthase (357 aa).

Arginine 46 is a binding site for NADP(+). Residues arginine 123–serine 125, asparagine 235–alanine 236, glycine 275, lysine 290–serine 294, and arginine 316 each bind FMN.

This sequence belongs to the chorismate synthase family. Homotetramer. FMNH2 is required as a cofactor.

The catalysed reaction is 5-O-(1-carboxyvinyl)-3-phosphoshikimate = chorismate + phosphate. It functions in the pathway metabolic intermediate biosynthesis; chorismate biosynthesis; chorismate from D-erythrose 4-phosphate and phosphoenolpyruvate: step 7/7. In terms of biological role, catalyzes the anti-1,4-elimination of the C-3 phosphate and the C-6 proR hydrogen from 5-enolpyruvylshikimate-3-phosphate (EPSP) to yield chorismate, which is the branch point compound that serves as the starting substrate for the three terminal pathways of aromatic amino acid biosynthesis. This reaction introduces a second double bond into the aromatic ring system. This is Chorismate synthase from Sulfurovum sp. (strain NBC37-1).